We begin with the raw amino-acid sequence, 181 residues long: MARGVNKVILVGTCGQDPEVRYLPNGNAVTNLSLATSEQWTDKQSGQKVERTEWHRVSLFGKVAEIAGEYLRKGSQCYIEGKLQTREWEKDGIKRYTTEIIVDINGTMQLLGGRPQGQQQGGDPYNQGGGNYGGGQQQQYNQAPPRQQAQRPQQAPQRPAPQQPAPQPAADFDSFDDDIPF.

Residues 5 to 109 (VNKVILVGTC…IIVDINGTMQ (105 aa)) enclose the SSB domain. The segment at 111 to 181 (LGGRPQGQQQ…FDSFDDDIPF (71 aa)) is disordered. The span at 112–126 (GGRPQGQQQGGDPYN) shows a compositional bias: low complexity. The segment covering 127-136 (QGGGNYGGGQ) has biased composition (gly residues). The segment covering 137-157 (QQQYNQAPPRQQAQRPQQAPQ) has biased composition (low complexity). A compositionally biased stretch (pro residues) spans 158–167 (RPAPQQPAPQ). The Important for interaction with partner proteins motif lies at 176–181 (DDDIPF).

In terms of assembly, homotetramer.

Its function is as follows. Plays an important role in DNA replication, recombination and repair. Binds to ssDNA and to an array of partner proteins to recruit them to their sites of action during DNA metabolism. This Pseudomonas putida (strain ATCC 47054 / DSM 6125 / CFBP 8728 / NCIMB 11950 / KT2440) protein is Single-stranded DNA-binding protein (ssb).